The following is a 101-amino-acid chain: Citrate lyase acyl carrier protein (101 aa).

Ser-14 is subject to O-(phosphoribosyl dephospho-coenzyme A)serine.

It belongs to the CitD family. Oligomer with a subunit composition of (alpha,beta,gamma)6.

It localises to the cytoplasm. Covalent carrier of the coenzyme of citrate lyase. This Latilactobacillus sakei subsp. sakei (strain 23K) (Lactobacillus sakei subsp. sakei) protein is Citrate lyase acyl carrier protein.